The sequence spans 382 residues: Putative acetyl-CoA C-acetyltransferase VraB (382 aa).

The active-site Acyl-thioester intermediate is cysteine 86. Histidine 338 serves as the catalytic Proton acceptor.

It belongs to the thiolase-like superfamily. Thiolase family.

This chain is Putative acetyl-CoA C-acetyltransferase VraB (vraB), found in Staphylococcus epidermidis (strain ATCC 12228 / FDA PCI 1200).